The primary structure comprises 391 residues: Polysialic acid biosynthesis protein P7 (391 aa).

Functionally, may be involved in the synthesis of polysialic acid (PSA). In Escherichia coli, this protein is Polysialic acid biosynthesis protein P7 (neuC).